The chain runs to 443 residues: Tol-Pal system protein TolB (443 aa).

Residues 1–18 (MRNIVYFILTLFSLTSYA) form the signal peptide.

The protein belongs to the TolB family. In terms of assembly, the Tol-Pal system is composed of five core proteins: the inner membrane proteins TolA, TolQ and TolR, the periplasmic protein TolB and the outer membrane protein Pal. They form a network linking the inner and outer membranes and the peptidoglycan layer.

It localises to the periplasm. Its function is as follows. Part of the Tol-Pal system, which plays a role in outer membrane invagination during cell division and is important for maintaining outer membrane integrity. This Rickettsia prowazekii (strain Madrid E) protein is Tol-Pal system protein TolB.